A 213-amino-acid chain; its full sequence is Pyridoxine/pyridoxamine 5'-phosphate oxidase (213 aa).

Substrate contacts are provided by residues 8–11 (RKNY) and K66. FMN is bound by residues 61–66 (RIVLIK), 76–77 (FT), R82, K83, and Q105. 3 residues coordinate substrate: Y123, R127, and S131. FMN-binding positions include 140–141 (QS) and W184. Residue 190 to 192 (RLH) coordinates substrate. FMN is bound at residue R194.

It belongs to the pyridoxamine 5'-phosphate oxidase family. As to quaternary structure, homodimer. Requires FMN as cofactor.

The enzyme catalyses pyridoxamine 5'-phosphate + O2 + H2O = pyridoxal 5'-phosphate + H2O2 + NH4(+). The catalysed reaction is pyridoxine 5'-phosphate + O2 = pyridoxal 5'-phosphate + H2O2. The protein operates within cofactor metabolism; pyridoxal 5'-phosphate salvage; pyridoxal 5'-phosphate from pyridoxamine 5'-phosphate: step 1/1. It functions in the pathway cofactor metabolism; pyridoxal 5'-phosphate salvage; pyridoxal 5'-phosphate from pyridoxine 5'-phosphate: step 1/1. Its function is as follows. Catalyzes the oxidation of either pyridoxine 5'-phosphate (PNP) or pyridoxamine 5'-phosphate (PMP) into pyridoxal 5'-phosphate (PLP). The protein is Pyridoxine/pyridoxamine 5'-phosphate oxidase of Paraburkholderia phytofirmans (strain DSM 17436 / LMG 22146 / PsJN) (Burkholderia phytofirmans).